A 39-amino-acid chain; its full sequence is Cytochrome b559 subunit beta (39 aa).

Residues 14–30 (WLAIHGLAVPTVFFLGS) traverse the membrane as a helical segment. His18 is a binding site for heme.

It belongs to the PsbE/PsbF family. Heterodimer of an alpha subunit and a beta subunit. PSII is composed of 1 copy each of membrane proteins PsbA, PsbB, PsbC, PsbD, PsbE, PsbF, PsbH, PsbI, PsbJ, PsbK, PsbL, PsbM, PsbT, PsbX, PsbY, PsbZ, Psb30/Ycf12, at least 3 peripheral proteins of the oxygen-evolving complex and a large number of cofactors. It forms dimeric complexes. It depends on heme b as a cofactor.

The protein localises to the plastid. It localises to the chloroplast thylakoid membrane. In terms of biological role, this b-type cytochrome is tightly associated with the reaction center of photosystem II (PSII). PSII is a light-driven water:plastoquinone oxidoreductase that uses light energy to abstract electrons from H(2)O, generating O(2) and a proton gradient subsequently used for ATP formation. It consists of a core antenna complex that captures photons, and an electron transfer chain that converts photonic excitation into a charge separation. This Staurastrum punctulatum (Green alga) protein is Cytochrome b559 subunit beta.